The following is a 221-amino-acid chain: GTP-binding nuclear protein Ran-1 (221 aa).

The region spanning D10–D174 is the Small GTPase Ran-type domain. D21 to T28 contributes to the GTP binding site. A switch-I region spans residues K40–V48. Residues G71, N125–D128, and S153–K155 contribute to the GTP site. Residues G71–Q87 are switch-II.

It belongs to the small GTPase superfamily. Ran family. As to quaternary structure, found in a nuclear export complex with RanGTP, exportin and pre-miRNA. Interacts with RANBP1A and RANBP1B. Interacts with TRN1. Interacts with ATX1. Interacts with KPNB1. Binds to XPO1. Interacts with MOS14. Binds to NTF2B.

It is found in the nucleus. GTP-binding protein involved in nucleocytoplasmic transport. Required for the import of protein into the nucleus and also for RNA export. Involved in chromatin condensation and control of cell cycle. This Arabidopsis thaliana (Mouse-ear cress) protein is GTP-binding nuclear protein Ran-1 (RAN1).